The primary structure comprises 197 residues: dTTP/UTP pyrophosphatase (197 aa).

Aspartate 69 acts as the Proton acceptor in catalysis.

Belongs to the Maf family. YhdE subfamily. A divalent metal cation is required as a cofactor.

It localises to the cytoplasm. It carries out the reaction dTTP + H2O = dTMP + diphosphate + H(+). The catalysed reaction is UTP + H2O = UMP + diphosphate + H(+). Functionally, nucleoside triphosphate pyrophosphatase that hydrolyzes dTTP and UTP. May have a dual role in cell division arrest and in preventing the incorporation of modified nucleotides into cellular nucleic acids. The chain is dTTP/UTP pyrophosphatase from Lachnoclostridium phytofermentans (strain ATCC 700394 / DSM 18823 / ISDg) (Clostridium phytofermentans).